Here is a 271-residue protein sequence, read N- to C-terminus: Troponin T, fast skeletal muscle (271 aa).

Over residues 1 to 21 the composition is skewed to acidic residues; the sequence is MSDEEVEHVEEEYEEEEEAQE. The disordered stretch occupies residues 1 to 74; that stretch reads MSDEEVEHVE…EKVDFDDIQK (74 aa). Residue Ser-2 is modified to N-acetylserine. Ser-2 bears the Phosphoserine mark. Basic and acidic residues-rich tracts occupy residues 29–53 and 62–74; these read EVHEVHEEVHEVHEPEEVQEEEKPR and PEGEKVDFDDIQK. Ser-90 is subject to Phosphoserine. A compositionally biased stretch (basic and acidic residues) spans 113 to 155; sequence RAERAEQQRIRAEKERERQNRLAEEKARREEEEAKRRAEDDLK. The interval 113 to 192 is disordered; it reads RAERAEQQRI…TAREMKKKVL (80 aa). A phosphoserine mark is found at Ser-161, Ser-168, and Ser-169. The span at 183-192 shows a compositional bias: basic and acidic residues; the sequence is TAREMKKKVL. The residue at position 205 (Ser-205) is a Phosphoserine. The residue at position 221 (Tyr-221) is a Phosphotyrosine. The segment at 249–271 is disordered; that stretch reads DQAQKHSKKAGTTPKGKVGGRWK.

Belongs to the troponin T family.

In terms of biological role, troponin T is the tropomyosin-binding subunit of troponin, the thin filament regulatory complex which confers calcium-sensitivity to striated muscle actomyosin ATPase activity. The polypeptide is Troponin T, fast skeletal muscle (TNNT3) (Sus scrofa (Pig)).